The following is a 137-amino-acid chain: Large-conductance mechanosensitive channel (137 aa).

2 helical membrane-spanning segments follow: residues 9-29 (AFAV…GAAF) and 79-99 (IQTI…VKAI).

Belongs to the MscL family. In terms of assembly, homopentamer.

The protein resides in the cell inner membrane. Functionally, channel that opens in response to stretch forces in the membrane lipid bilayer. May participate in the regulation of osmotic pressure changes within the cell. The polypeptide is Large-conductance mechanosensitive channel (Pseudomonas paraeruginosa (strain DSM 24068 / PA7) (Pseudomonas aeruginosa (strain PA7))).